Reading from the N-terminus, the 508-residue chain is Glycerol kinase (508 aa).

Residue Thr14 participates in ADP binding. The ATP site is built by Thr14, Thr15, and Ser16. Thr14 lines the sn-glycerol 3-phosphate pocket. Arg18 provides a ligand contact to ADP. Arg84, Glu85, and Tyr136 together coordinate sn-glycerol 3-phosphate. Glycerol contacts are provided by Arg84, Glu85, and Tyr136. Position 232 is a phosphohistidine; by HPr (His232). Residue Asp246 participates in sn-glycerol 3-phosphate binding. The glycerol site is built by Asp246 and Gln247. The ADP site is built by Thr268 and Gly311. Residues Thr268, Gly311, Gln315, and Gly412 each coordinate ATP. ADP contacts are provided by Gly412 and Asn416.

The protein belongs to the FGGY kinase family. Homotetramer and homodimer (in equilibrium). In terms of processing, the phosphoenolpyruvate-dependent sugar phosphotransferase system (PTS), including enzyme I, and histidine-containing protein (HPr) are required for the phosphorylation, which leads to the activation of the enzyme.

It catalyses the reaction glycerol + ATP = sn-glycerol 3-phosphate + ADP + H(+). Its pathway is polyol metabolism; glycerol degradation via glycerol kinase pathway; sn-glycerol 3-phosphate from glycerol: step 1/1. Its activity is regulated as follows. Activated by phosphorylation and inhibited by fructose 1,6-bisphosphate (FBP). Its function is as follows. Key enzyme in the regulation of glycerol uptake and metabolism. Catalyzes the phosphorylation of glycerol to yield sn-glycerol 3-phosphate. This Streptococcus pyogenes serotype M18 (strain MGAS8232) protein is Glycerol kinase.